The sequence spans 164 residues: Crossover junction endodeoxyribonuclease RuvC (164 aa).

Active-site residues include aspartate 7, glutamate 67, and aspartate 139. Residues aspartate 7, glutamate 67, and aspartate 139 each contribute to the Mg(2+) site.

Belongs to the RuvC family. As to quaternary structure, homodimer which binds Holliday junction (HJ) DNA. The HJ becomes 2-fold symmetrical on binding to RuvC with unstacked arms; it has a different conformation from HJ DNA in complex with RuvA. In the full resolvosome a probable DNA-RuvA(4)-RuvB(12)-RuvC(2) complex forms which resolves the HJ. Requires Mg(2+) as cofactor.

The protein resides in the cytoplasm. It carries out the reaction Endonucleolytic cleavage at a junction such as a reciprocal single-stranded crossover between two homologous DNA duplexes (Holliday junction).. The RuvA-RuvB-RuvC complex processes Holliday junction (HJ) DNA during genetic recombination and DNA repair. Endonuclease that resolves HJ intermediates. Cleaves cruciform DNA by making single-stranded nicks across the HJ at symmetrical positions within the homologous arms, yielding a 5'-phosphate and a 3'-hydroxyl group; requires a central core of homology in the junction. The consensus cleavage sequence is 5'-(A/T)TT(C/G)-3'. Cleavage occurs on the 3'-side of the TT dinucleotide at the point of strand exchange. HJ branch migration catalyzed by RuvA-RuvB allows RuvC to scan DNA until it finds its consensus sequence, where it cleaves and resolves the cruciform DNA. The sequence is that of Crossover junction endodeoxyribonuclease RuvC from Citrifermentans bemidjiense (strain ATCC BAA-1014 / DSM 16622 / JCM 12645 / Bem) (Geobacter bemidjiensis).